Here is a 504-residue protein sequence, read N- to C-terminus: Zinc finger protein AEBP2 (504 aa).

The interval 1-219 (MAAALADMAD…SRMDSEDSIS (219 aa)) is disordered. The residue at position 2 (A2) is an N-acetylalanine. Residues 16 to 30 (RLSPLSPGSPGPAAR) are compositionally biased toward low complexity. 3 positions are modified to phosphoserine: S18, S21, and S24. A compositionally biased stretch (acidic residues) spans 36 to 49 (PEEEEEEDDEEAEA). The segment covering 59–69 (GGAGGGAGGGE) has biased composition (gly residues). Acidic residues predominate over residues 86–110 (GDEDEDEEDDEDEGSSSGGAEEESS). Over residues 129-140 (SLSPGAASSSSG) the composition is skewed to low complexity. S131 bears the Phosphoserine mark. The segment covering 142 to 153 (GDGKEGLEEPKG) has biased composition (basic and acidic residues). Composition is skewed to gly residues over residues 154–168 (PRGG…GGGS) and 178–189 (GDEGYGTGGGGS). Phosphoserine is present on residues S199, S203, and S204. An interaction with RBBP4 region spans residues 202-287 (MSSDGEPLSR…IHVDGQRGGV (86 aa)). The segment at 254–279 (YNCCWDQCQACFNSSPDLADHIRSIH) adopts a C2H2-type 1 zinc-finger fold. The C2H2-type 2; degenerate zinc finger occupies 293–315 (KGCKVYNTPSTSQSWLQRHMLTH). Residues 321–345 (FKCVVGGCNASFASQGGLARHVPTH) form a C2H2-type 3 zinc finger. The segment covering 345 to 358 (HFSQQNSSKVSSQP) has biased composition (polar residues). The disordered stretch occupies residues 345-387 (HFSQQNSSKVSSQPKAKEESPSKAGMNKRRKLKNKRRRSLPRP). Positions 370–385 (MNKRRKLKNKRRRSLP) are enriched in basic residues. The residue at position 383 (S383) is a Phosphoserine. Positions 400–471 (RHRAICFNLS…QLKTKVVHLS (72 aa)) are interaction with SUZ12. Residues 488 to 504 (TMPQKRLKRFDILNFPR) form an important for nucleosome binding activity of the PRC2 complex region.

It belongs to the AEBP2/jing C2H2-type zinc-finger family. Self-associates. Associates with the PRC2 complex, which consists of the core components EED, EZH1 or EZH2, SUZ12, and RBBP4, and various combinations of accessory subunits including AEBP2, JARID2, PHF19, MTF2 and EPOP. Found in a monomeric PRC2.2 (class 2) complex consisting of at least SUZ12, RBBP4, AEBP2 and JARID2. Within the PRC2 complex, interacts directly with SUZ12; competes with PHF19 for SUZ12 binding. Interacts with EED, EZH2, and RBBP4. May also interact with RBBP7. Expressed in brain, brown adipose tissue, white adipose tissue, heart, kidney, lung, skeletal muscle, small intestine and spleen. Expressed at low levels in liver.

The protein localises to the nucleus. In terms of biological role, acts as an accessory subunit for the core Polycomb repressive complex 2 (PRC2), which mediates histone H3K27 (H3K27me3) trimethylation on chromatin leading to transcriptional repression of the affected target gene. Plays a role in nucleosome localization of the PRC2 complex. This chain is Zinc finger protein AEBP2 (Aebp2), found in Mus musculus (Mouse).